The primary structure comprises 374 residues: 4-hydroxy-3-methylbut-2-en-1-yl diphosphate synthase (flavodoxin) (374 aa).

[4Fe-4S] cluster-binding residues include C272, C275, C307, and E314.

This sequence belongs to the IspG family. [4Fe-4S] cluster is required as a cofactor.

It carries out the reaction (2E)-4-hydroxy-3-methylbut-2-enyl diphosphate + oxidized [flavodoxin] + H2O + 2 H(+) = 2-C-methyl-D-erythritol 2,4-cyclic diphosphate + reduced [flavodoxin]. The protein operates within isoprenoid biosynthesis; isopentenyl diphosphate biosynthesis via DXP pathway; isopentenyl diphosphate from 1-deoxy-D-xylulose 5-phosphate: step 5/6. Its function is as follows. Converts 2C-methyl-D-erythritol 2,4-cyclodiphosphate (ME-2,4cPP) into 1-hydroxy-2-methyl-2-(E)-butenyl 4-diphosphate. In Acidiphilium cryptum (strain JF-5), this protein is 4-hydroxy-3-methylbut-2-en-1-yl diphosphate synthase (flavodoxin).